The following is a 146-amino-acid chain: LFNEERFRSIPIHYRLNRIPSYGFIFYQHRSAASTNNQFIPYPFYARPVAVRPHAQKPQWQDQPNVYPPTGARRPRPHASFIAIPPKKNQDTTAIPAINSIATVEPTLIPTTEPVVNTVVIPEAASEFLITNTPETTAVQVSSTVV.

O-linked (GalNAc...) threonine glycans are attached at residues T107, T112, and T118. At S143 the chain carries Phosphoserine.

The protein belongs to the kappa-casein family. As to expression, mammary gland specific. Secreted in milk.

Its subcellular location is the secreted. Kappa-casein stabilizes micelle formation, preventing casein precipitation in milk. The chain is Kappa-casein (CSN3) from Dicotyles tajacu (Collared peccary).